Here is a 301-residue protein sequence, read N- to C-terminus: Mitochondrial ornithine transporter 1 (301 aa).

Helical transmembrane passes span 5–25 (PAIQAAIDLTAGAAGGTACVL), 68–88 (SPALIANIAENSVLFMCYGFC), 110–130 (AAAGSFASAFAALVLCPTELV), 168–188 (GFYHGLSSTLLREVPGYFFFF), 207–227 (LGPVPLMLSGGFGGICLWLAV), and 237–257 (IQVLSMTGKQTGLVRTFLSIV). Solcar repeat units follow at residues 7 to 91 (IQAA…CQQV), 104 to 197 (LSDL…SRSF), and 207 to 293 (LGPV…SRKL).

This sequence belongs to the mitochondrial carrier (TC 2.A.29) family. In terms of tissue distribution, widely expressed, with highest levels in the liver, testis and kidney. In the brain, expressed at high levels in the hypothalamus.

It localises to the mitochondrion inner membrane. It is found in the mitochondrion membrane. It catalyses the reaction L-citrulline(in) + L-ornithine(out) + H(+)(in) = L-citrulline(out) + L-ornithine(in) + H(+)(out). It carries out the reaction L-ornithine(in) + L-arginine(out) = L-ornithine(out) + L-arginine(in). The catalysed reaction is L-ornithine(out) + L-lysine(in) = L-ornithine(in) + L-lysine(out). The enzyme catalyses L-lysine(out) + H(+)(in) = L-lysine(in) + H(+)(out). It catalyses the reaction L-ornithine(out) + H(+)(in) = L-ornithine(in) + H(+)(out). Its activity is regulated as follows. Inhibited by pyridoxal 5'-phosphate as well as by mercurials (mersalyl, p-chloromercuribenzene sulfonate, and mercuric chloride), N-ethylmaleimide and spermine. Its function is as follows. Mitochondrial ornithine-citrulline antiporter. Catalyzes the exchange between cytosolic ornithine and mitochondrial citrulline plus an H(+), the proton compensates the positive charge of ornithine thus leading to an electroneutral transport. Plays a crucial role in the urea cycle, by connecting the cytosolic and the intramitochondrial reactions of the urea cycle. Lysine and arginine are also transported by the antiport mechanism. In addition, catalyzes an electroneutral exchange of ornithine or lysine for H(+), a reaction driven by the pH gradient across the inner membrane. In Mus musculus (Mouse), this protein is Mitochondrial ornithine transporter 1.